A 383-amino-acid polypeptide reads, in one-letter code: MGAGGRMPVPTSSKKSETDTTKRVPCEKPPFSVGDLKKAIPPHCFKRSIPRSFSYLISDIIIASCFYYVATNYFSLLPQPLSYLAWPLYWACQGCVLTGIWVIAHECGHHAFSDYQWLDDTVGLIFHSFLLVPYFSWKYSHRRHHSNTGSLERDEVFVPKQKSAIKWYGKYLNNPLGRIMMLTVQFVLGWPLYLAFNVSGRPYDGFACHFFPNAPIYNDRERLQIYLSDAGILAVCFGLYRYAAAQGMASMICLYGVPLLIVNAFLVLITYLQHTHPSLPHYDSSEWDWLRGALATVDRDYGILNKVFHNITDTHVAHHLFSTMPHYNAMEATKAIKPILGDYYQFDGTPWYVAMYREAKECIYVEPDREGDKKGVYWYNNKL.

The tract at residues 1-24 (MGAGGRMPVPTSSKKSETDTTKRV) is disordered. Over residues 14–24 (KKSETDTTKRV) the composition is skewed to basic and acidic residues. A helical membrane pass occupies residues 56–76 (LISDIIIASCFYYVATNYFSL). The Histidine box-1 motif lies at 105 to 109 (HECGH). A helical transmembrane segment spans residues 117 to 137 (WLDDTVGLIFHSFLLVPYFSW). The Histidine box-2 signature appears at 141-145 (HRRHH). 3 helical membrane-spanning segments follow: residues 179-199 (IMMLTVQFVLGWPLYLAFNVS), 225-245 (IYLSDAGILAVCFGLYRYAAA), and 252-272 (ICLYGVPLLIVNAFLVLITYL). A Histidine box-3 motif is present at residues 315 to 319 (HVAHH).

It belongs to the fatty acid desaturase type 1 family. Homo- and heterodimer. Interacts with FAD3 but not with FAD6. FAD2-FAD3 heterodimers can form a metabolic channel in which 18:1-PC is converted to 18:3-PC without releasing a free 18:2-PC intermediate. As to expression, expressed in shoots and roots. Expressed in leaves, stems, flowers and siliques.

It is found in the endoplasmic reticulum membrane. Its subcellular location is the microsome membrane. It carries out the reaction (9Z)-octadecenoyl-CoA + 2 Fe(II)-[cytochrome b5] + O2 + 2 H(+) = (9Z,12Z)-octadecadienoyl-CoA + 2 Fe(III)-[cytochrome b5] + 2 H2O. The enzyme catalyses (9Z)-hexadecenoyl-CoA + 2 Fe(II)-[cytochrome b5] + O2 + 2 H(+) = (9Z,12Z)-hexadecadienoyl-CoA + 2 Fe(III)-[cytochrome b5] + 2 H2O. The catalysed reaction is a (9Z)-octadecenoyl-containing glycerolipid + 2 Fe(II)-[cytochrome b5] + O2 + 2 H(+) = a (9Z,12Z)-octadecadienoyl-containing glycerolipid + 2 Fe(III)-[cytochrome b5] + 2 H2O. It catalyses the reaction (9Z)-octadecenoyl-CoA + AH2 + O2 = (9Z,12Z)-octadecadienoyl-CoA + A + 2 H2O. It carries out the reaction (9Z)-hexadecenoyl-CoA + AH2 + O2 = (9Z,12Z)-hexadecadienoyl-CoA + A + 2 H2O. The enzyme catalyses (9Z)-tetradecenoyl-CoA + 2 Fe(II)-[cytochrome b5] + O2 + 2 H(+) = (9Z,12Z)-tetradecadienoyl-CoA + 2 Fe(III)-[cytochrome b5] + 2 H2O. The catalysed reaction is (9Z)-pentadecenoyl-CoA + 2 Fe(II)-[cytochrome b5] + O2 + 2 H(+) = (9Z,12Z)-pentadecadienoyl-CoA + 2 Fe(III)-[cytochrome b5] + 2 H2O. It catalyses the reaction (9Z)-heptadecenoyl-CoA + 2 Fe(II)-[cytochrome b5] + O2 + 2 H(+) = (9Z,12Z)-heptadecadienoyl-CoA + 2 Fe(III)-[cytochrome b5] + 2 H2O. It participates in lipid metabolism; polyunsaturated fatty acid biosynthesis. Functionally, ER (microsomal) omega-6 fatty acid desaturase introduces the second double bond in the biosynthesis of 18:3 fatty acids, important constituents of plant membranes. Delta(12)-desaturase with regioselectivity determined by the double bond (delta(9) position) and carboxyl group of the substrate. Can use both 16:1 and 18:1 fatty acids as substrates. It is thought to use cytochrome b5 as an electron donor and to act on fatty acids esterified to phosphatidylcholine (PC) and, possibly, other phospholipids. Very low constitutive hydroxylation activity. Required for desaturation of fatty acids present in extraplastidial membranes, including mitochondria. Required for salt tolerance during seed germination and early seedling growth. The sequence is that of Delta(12)-fatty-acid desaturase from Arabidopsis thaliana (Mouse-ear cress).